Reading from the N-terminus, the 376-residue chain is MVKQDYYEILGVSKTAEEREIRKAYKRLAMKYHPDRNQGDKEAEAKFKEIKEAYEVLTDSQKRAAYDQYGHAAFEQGGMGGGGFGGGADFSDIFGDVFGDIFGGGRGRQRAARGADLRYNMELTLEEAVRGVTKEIRIPTLEECDVCHGSGAKPGTQPQTCPTCHGSGQVQMRQGFFAVQQTCPHCQGRGTLIKDPCNKCHGHGRVERSKTLSVKIPAGVDTGDRIRLAGEGEAGEHGAPAGDLYVQVQVKQHPIFEREGNNLYCEVPINFAMAALGGEIEVPTLDGRVKLKVPGETQTGKLFRMRGKGVKSVRGGAQGDLLCRVVVETPVGLNERQKQLLQELQESFGGPTGEHNSPRSKSFFDGVKKFFDDLTR.

A J domain is found at 5–70 (DYYEILGVSK…QKRAAYDQYG (66 aa)). A CR-type zinc finger spans residues 131 to 209 (GVTKEIRIPT…CHGHGRVERS (79 aa)). Residues Cys144, Cys147, Cys161, Cys164, Cys183, Cys186, Cys197, and Cys200 each coordinate Zn(2+). 4 CXXCXGXG motif repeats span residues 144–151 (CDVCHGSG), 161–168 (CPTCHGSG), 183–190 (CPHCQGRG), and 197–204 (CNKCHGHG).

This sequence belongs to the DnaJ family. In terms of assembly, homodimer. Zn(2+) serves as cofactor.

The protein resides in the cytoplasm. Participates actively in the response to hyperosmotic and heat shock by preventing the aggregation of stress-denatured proteins and by disaggregating proteins, also in an autonomous, DnaK-independent fashion. Unfolded proteins bind initially to DnaJ; upon interaction with the DnaJ-bound protein, DnaK hydrolyzes its bound ATP, resulting in the formation of a stable complex. GrpE releases ADP from DnaK; ATP binding to DnaK triggers the release of the substrate protein, thus completing the reaction cycle. Several rounds of ATP-dependent interactions between DnaJ, DnaK and GrpE are required for fully efficient folding. Also involved, together with DnaK and GrpE, in the DNA replication of plasmids through activation of initiation proteins. The sequence is that of Chaperone protein DnaJ from Escherichia coli (strain K12 / MC4100 / BW2952).